The sequence spans 430 residues: Serine--tRNA ligase (430 aa).

Residue 235 to 237 (TSE) coordinates L-serine. 266 to 268 (RSE) provides a ligand contact to ATP. Glu-289 provides a ligand contact to L-serine. 353–356 (EISS) provides a ligand contact to ATP. Ser-388 lines the L-serine pocket.

Belongs to the class-II aminoacyl-tRNA synthetase family. Type-1 seryl-tRNA synthetase subfamily. In terms of assembly, homodimer. The tRNA molecule binds across the dimer.

The protein resides in the cytoplasm. It carries out the reaction tRNA(Ser) + L-serine + ATP = L-seryl-tRNA(Ser) + AMP + diphosphate + H(+). It catalyses the reaction tRNA(Sec) + L-serine + ATP = L-seryl-tRNA(Sec) + AMP + diphosphate + H(+). The protein operates within aminoacyl-tRNA biosynthesis; selenocysteinyl-tRNA(Sec) biosynthesis; L-seryl-tRNA(Sec) from L-serine and tRNA(Sec): step 1/1. Its function is as follows. Catalyzes the attachment of serine to tRNA(Ser). Is also able to aminoacylate tRNA(Sec) with serine, to form the misacylated tRNA L-seryl-tRNA(Sec), which will be further converted into selenocysteinyl-tRNA(Sec). This is Serine--tRNA ligase from Azoarcus sp. (strain BH72).